A 143-amino-acid polypeptide reads, in one-letter code: Transcriptional regulator MraZ (143 aa).

2 SpoVT-AbrB domains span residues Glu-5 to Glu-47 and Ala-76 to Arg-119.

This sequence belongs to the MraZ family. As to quaternary structure, forms oligomers.

Its subcellular location is the cytoplasm. The protein localises to the nucleoid. The chain is Transcriptional regulator MraZ from Lactobacillus gasseri (strain ATCC 33323 / DSM 20243 / BCRC 14619 / CIP 102991 / JCM 1131 / KCTC 3163 / NCIMB 11718 / NCTC 13722 / AM63).